The sequence spans 2192 residues: BEACH domain-containing protein lvsE (2192 aa).

4 disordered regions span residues 948–969 (STSL…TSTG), 996–1065 (TTTT…DEPE), 1160–1303 (NESQ…NNLS), and 1343–1363 (DENG…SSSN). Low complexity predominate over residues 996 to 1049 (TTTTTTTTTTTTTTSTTSNTGNDSPLSIESPISSPVLIENTTNTTNTTTTNTTN). Over residues 1171–1187 (NIDNLNPNTGLPYNKST) the composition is skewed to polar residues. The segment covering 1188–1231 (NNLSNVNNVNNNNNNNSNNINVSGNNTIGPSSSKSPLRNSRSMS) has biased composition (low complexity). Residues 1232-1243 (IGSSATKSPSRQ) show a composition bias toward polar residues. Low complexity-rich tracts occupy residues 1253 to 1303 (NNNS…NNLS) and 1350 to 1363 (SSPN…SSSN). Residues 1366–1491 (IEEEKFIGSW…ESIQIFNKIV (126 aa)) form the BEACH-type PH domain. Positions 1504 to 1795 (DHPSKIIKKS…QLFSKPHPIR (292 aa)) constitute a BEACH domain. Residues 1823–1849 (GTINSSFSSTSTSTSTSSPPPSTLNSP) are compositionally biased toward low complexity. The tract at residues 1823 to 1851 (GTINSSFSSTSTSTSTSSPPPSTLNSPQG) is disordered. WD repeat units follow at residues 1973–2012 (FHHD…IKDS), 2022–2061 (SHDE…YQRS), and 2156–2192 (DSPA…VKDL).

This Dictyostelium discoideum (Social amoeba) protein is BEACH domain-containing protein lvsE (lvsE).